The chain runs to 807 residues: Potassium transporter 9 (807 aa).

The Cytoplasmic portion of the chain corresponds to 1 to 59; sequence MAERVEASSVPEGENTIEEREVGAMWELEQKLDQPMDEEANKLNNMYREKGLSMLMLLR. The chain crosses the membrane as a helical span at residues 60–80; the sequence is LSFQSLGIVYGDLGTSPLYVF. At 81–96 the chain is on the extracellular side; it reads YNTFPDGIDDSEDVIG. A helical transmembrane segment spans residues 97-117; the sequence is ALSLIIYSLLLIPLIKYVFIV. The Cytoplasmic portion of the chain corresponds to 118-185; sequence CKANDNGQGG…EGKEWRKRAL (68 aa). Residues 186-206 traverse the membrane as a helical segment; it reads LVVVLLGTCMMIGDGILTPAI. Residues 207–225 lie on the Extracellular side of the membrane; it reads SVLSATGGIKVNNPKMSGD. The helical transmembrane segment at 226–246 threads the bilayer; sequence IVVLVAIVILIGLFSMQHYGT. At 247 to 248 the chain is on the cytoplasmic side; that stretch reads DK. Residues 249 to 269 form a helical membrane-spanning segment; that stretch reads VGWLFAPIVLIWFLFIGATGM. Residues 270 to 299 lie on the Extracellular side of the membrane; the sequence is YNICKYDTSVLKAFSPTYIYLYFKRRGRDG. A helical transmembrane segment spans residues 300 to 320; that stretch reads WISLGGILLSITGTEALYADI. The Cytoplasmic portion of the chain corresponds to 321 to 322; sequence AY. A helical transmembrane segment spans residues 323 to 343; the sequence is FPLLAIQLAFTFFVFPCLLLA. Topologically, residues 344–369 are extracellular; that stretch reads YCGQAAYLVIHKEHYQDAFYASIPDS. The chain crosses the membrane as a helical span at residues 370–390; the sequence is VYWPMFIVATGAAIVGSQATI. Residues 391–417 are Cytoplasmic-facing; sequence SGTYSIVKQAVAHGCFPRVKIVHTSKK. The helical transmembrane segment at 418–438 threads the bilayer; sequence FLGQIYCPDINWILMLGCIAV. The Extracellular portion of the chain corresponds to 439–454; it reads TASFKKQSQIGNAYGT. Residues 455-475 form a helical membrane-spanning segment; it reads AVVLVMLVTTLLMVLIMLLVW. At 476-481 the chain is on the cytoplasmic side; the sequence is HCHWIL. Residues 482–502 traverse the membrane as a helical segment; that stretch reads VLIFTFLSFFVELSYFSAVIF. Residues 503 to 507 are Extracellular-facing; that stretch reads KIDEG. Residues 508 to 528 form a helical membrane-spanning segment; sequence GWVPLIIAAISLLVMSVWHYA. Residues 529 to 807 lie on the Cytoplasmic side of the membrane; that stretch reads TVKKYEFEMH…LLNVGQVFYV (279 aa).

Belongs to the HAK/KUP transporter (TC 2.A.72.3) family.

It is found in the cell membrane. Putative potassium transporter. The polypeptide is Potassium transporter 9 (POT9) (Arabidopsis thaliana (Mouse-ear cress)).